A 79-amino-acid chain; its full sequence is MAKLSFLSLFLLCLVATATAQNCGRQAGNRACANQLCCSQYGFCGSTSEYCSRANGCQSNCRGGGGADGAGGEAGGGGP.

Residues 1-20 form the signal peptide; sequence MAKLSFLSLFLLCLVATATA. Positions 21–63 constitute a Chitin-binding type-1 domain; it reads QNCGRQAGNRACANQLCCSQYGFCGSTSEYCSRANGCQSNCRG. Intrachain disulfides connect Cys23–Cys38, Cys32–Cys44, Cys37–Cys51, and Cys57–Cys61. Residues 64 to 79 constitute a propeptide that is removed on maturation; that stretch reads GGGADGAGGEAGGGGP.

In terms of tissue distribution, leaves (at protein level).

Its function is as follows. Chitin-binding protein which functions in defense against chitin-containing fungal pathogens. Inhibits the growth of budding hyphae in A.alternata and A.brassiciola. This Moringa oleifera (Horseradish tree) protein is Morintide mO1.